The chain runs to 76 residues: MSIEERVKKIIVDQLGVKEEEVKSEASFIEDLGADSLDTVELVMALEEEFDIEIPDEEAEKITTVQSAIDYVQNNQ.

Residues 1-76 form the Carrier domain; sequence MSIEERVKKI…SAIDYVQNNQ (76 aa). At serine 36 the chain carries O-(pantetheine 4'-phosphoryl)serine.

It belongs to the acyl carrier protein (ACP) family. 4'-phosphopantetheine is transferred from CoA to a specific serine of apo-ACP by AcpS. This modification is essential for activity because fatty acids are bound in thioester linkage to the sulfhydryl of the prosthetic group.

Its subcellular location is the cytoplasm. The protein operates within lipid metabolism; fatty acid biosynthesis. In terms of biological role, carrier of the growing fatty acid chain in fatty acid biosynthesis. The chain is Acyl carrier protein from Mannheimia succiniciproducens (strain KCTC 0769BP / MBEL55E).